Here is a 125-residue protein sequence, read N- to C-terminus: Small ribosomal subunit protein bS6 (125 aa).

Positions 97–125 (TEASPMKAAKEERKPLAEVENNDFEDAEE) are disordered. The span at 104–113 (AAKEERKPLA) shows a compositional bias: basic and acidic residues. The span at 116 to 125 (ENNDFEDAEE) shows a compositional bias: acidic residues.

Belongs to the bacterial ribosomal protein bS6 family.

Binds together with bS18 to 16S ribosomal RNA. This chain is Small ribosomal subunit protein bS6, found in Haemophilus influenzae (strain PittEE).